Here is an 810-residue protein sequence, read N- to C-terminus: Lon protease (810 aa).

A Lon N-terminal domain is found at 8–201 (LPLLPLRGIL…KLCGIVAKEL (194 aa)). 353-360 (GPPGVGKT) provides a ligand contact to ATP. A Lon proteolytic domain is found at 589–770 (NDEVGTVTGM…DQVLAIALLE (182 aa)). Catalysis depends on residues S676 and K719.

Belongs to the peptidase S16 family. As to quaternary structure, homohexamer. Organized in a ring with a central cavity.

It is found in the cytoplasm. It catalyses the reaction Hydrolysis of proteins in presence of ATP.. Functionally, ATP-dependent serine protease that mediates the selective degradation of mutant and abnormal proteins as well as certain short-lived regulatory proteins. Required for cellular homeostasis and for survival from DNA damage and developmental changes induced by stress. Degrades polypeptides processively to yield small peptide fragments that are 5 to 10 amino acids long. Binds to DNA in a double-stranded, site-specific manner. This is Lon protease from Desulforamulus reducens (strain ATCC BAA-1160 / DSM 100696 / MI-1) (Desulfotomaculum reducens).